Reading from the N-terminus, the 118-residue chain is Thioredoxin H-type 2 (118 aa).

The Thioredoxin domain occupies 2 to 113 (AEEGQVIGVH…LQQTIAKHIS (112 aa)). Residues cysteine 39 and cysteine 42 each act as nucleophile in the active site. Cysteine 39 and cysteine 42 are disulfide-bonded.

This sequence belongs to the thioredoxin family. Plant H-type subfamily.

It is found in the cytoplasm. Functionally, participates in various redox reactions through the reversible oxidation of the active center dithiol to a disulfide. The H form is known to activate a number of cytosolic enzymes. In Nicotiana tabacum (Common tobacco), this protein is Thioredoxin H-type 2.